The chain runs to 381 residues: Homoserine O-succinyltransferase (381 aa).

In terms of domain architecture, AB hydrolase-1 spans 45–360 (NAVLVCHALN…PHGHDAFLLD (316 aa)). Residue Ser-151 is the Nucleophile of the active site. Arg-221 is a substrate binding site. Residues Asp-321 and His-354 contribute to the active site. A substrate-binding site is contributed by Asp-355.

Belongs to the AB hydrolase superfamily. MetX family. As to quaternary structure, homodimer.

It localises to the cytoplasm. It carries out the reaction L-homoserine + succinyl-CoA = O-succinyl-L-homoserine + CoA. It participates in amino-acid biosynthesis; L-methionine biosynthesis via de novo pathway; O-succinyl-L-homoserine from L-homoserine: step 1/1. Its function is as follows. Transfers a succinyl group from succinyl-CoA to L-homoserine, forming succinyl-L-homoserine. The chain is Homoserine O-succinyltransferase from Burkholderia vietnamiensis (strain G4 / LMG 22486) (Burkholderia cepacia (strain R1808)).